Consider the following 926-residue polypeptide: DNA mismatch repair protein MutS (926 aa).

The disordered stretch occupies residues 16 to 40 (VASTPTRRGRPPGSSAARASNGAGS). Over residues 26 to 40 (PPGSSAARASNGAGS) the composition is skewed to low complexity. 658 to 665 (GPNMAGKS) contacts ATP.

This sequence belongs to the DNA mismatch repair MutS family.

In terms of biological role, this protein is involved in the repair of mismatches in DNA. It is possible that it carries out the mismatch recognition step. This protein has a weak ATPase activity. The chain is DNA mismatch repair protein MutS from Granulibacter bethesdensis (strain ATCC BAA-1260 / CGDNIH1).